The following is an 89-amino-acid chain: Small ribosomal subunit protein uS19 (89 aa).

This sequence belongs to the universal ribosomal protein uS19 family.

In terms of biological role, protein S19 forms a complex with S13 that binds strongly to the 16S ribosomal RNA. This Akkermansia muciniphila (strain ATCC BAA-835 / DSM 22959 / JCM 33894 / BCRC 81048 / CCUG 64013 / CIP 107961 / Muc) protein is Small ribosomal subunit protein uS19.